Consider the following 346-residue polypeptide: Annexin A1 (346 aa).

Ala2 is subject to N-acetylalanine. Phosphoserine; by TRPM7 is present on Ser5. Gln19 is covalently cross-linked (Isoglutamyl lysine isopeptide (Gln-Lys) (interchain with K-?)). Tyr21 bears the Phosphotyrosine; by EGFR mark. Residue Ser27 is modified to Phosphoserine; by PKC. Phosphoserine occurs at positions 34 and 37. Thr41 carries the phosphothreonine modification. Annexin repeat units follow at residues 42 to 113, 114 to 185, 197 to 269, and 273 to 344; these read FNPS…ALLK, TPAQ…SLAK, DLAD…AIVK, and SKPA…ALCG. Position 58 is an N6-acetyllysine (Lys58). Residues Gly59, Val60, Glu62, Lys97, Leu100, Glu105, Met127, Gly129, Gly131, Thr132, and Glu134 each coordinate Ca(2+). Thr136 carries the post-translational modification Phosphothreonine. Positions 171, 210, and 213 each coordinate Ca(2+). Residue Lys214 forms a Glycyl lysine isopeptide (Lys-Gly) (interchain with G-Cter in SUMO1); alternate linkage. Lys214 is covalently cross-linked (Glycyl lysine isopeptide (Lys-Gly) (interchain with G-Cter in SUMO2); alternate). Position 215 (Gly215) interacts with Ca(2+). Lys239 bears the N6-acetyllysine mark. Residues Asp253, Glu255, and Leu256 each contribute to the Ca(2+) site. Lys257 participates in a covalent cross-link: Glycyl lysine isopeptide (Lys-Gly) (interchain with G-Cter in SUMO1). Glu261, Met286, Gly288, and Gly290 together coordinate Ca(2+). Lys312 carries the N6-acetyllysine modification. Cysteines 324 and 343 form a disulfide. Leu328, Glu330, and Thr331 together coordinate Ca(2+). Lys332 is covalently cross-linked (Glycyl lysine isopeptide (Lys-Gly) (interchain with G-Cter in SUMO1)). Residue Glu336 coordinates Ca(2+).

It belongs to the annexin family. As to quaternary structure, homodimer; non-covalently linked. Homodimer; linked by transglutamylation. Homodimers linked by transglutamylation are observed in placenta, but not in other tissues. Interacts with S100A11. Heterotetramer, formed by two molecules each of S100A11 and ANXA1. Interacts with DYSF. Interacts with EGFR. In terms of processing, phosphorylated by protein kinase C, EGFR and TRPM7. Phosphorylated in response to EGF treatment. Post-translationally, sumoylated. Proteolytically cleaved by cathepsin CTSG to release the active N-terminal peptide Ac2-26. In terms of tissue distribution, detected in resting neutrophils. Detected in peripheral blood T-cells. Detected in extracellular vesicles in blood serum from patients with inflammatory bowel disease, but not in serum from healthy donors. Detected in placenta (at protein level). Detected in liver.

The protein localises to the nucleus. It is found in the cytoplasm. It localises to the cell projection. The protein resides in the cilium. Its subcellular location is the cell membrane. The protein localises to the membrane. It is found in the endosome membrane. It localises to the basolateral cell membrane. The protein resides in the apical cell membrane. Its subcellular location is the lateral cell membrane. The protein localises to the secreted. It is found in the extracellular space. It localises to the extracellular exosome. The protein resides in the cytoplasmic vesicle. Its subcellular location is the secretory vesicle lumen. The protein localises to the phagocytic cup. It is found in the early endosome. It localises to the cytoplasmic vesicle membrane. Plays important roles in the innate immune response as effector of glucocorticoid-mediated responses and regulator of the inflammatory process. Has anti-inflammatory activity. Plays a role in glucocorticoid-mediated down-regulation of the early phase of the inflammatory response. Contributes to the adaptive immune response by enhancing signaling cascades that are triggered by T-cell activation, regulates differentiation and proliferation of activated T-cells. Promotes the differentiation of T-cells into Th1 cells and negatively regulates differentiation into Th2 cells. Has no effect on unstimulated T cells. Negatively regulates hormone exocytosis via activation of the formyl peptide receptors and reorganization of the actin cytoskeleton. Has high affinity for Ca(2+) and can bind up to eight Ca(2+) ions. Displays Ca(2+)-dependent binding to phospholipid membranes. Plays a role in the formation of phagocytic cups and phagosomes. Plays a role in phagocytosis by mediating the Ca(2+)-dependent interaction between phagosomes and the actin cytoskeleton. Functionally, functions at least in part by activating the formyl peptide receptors and downstream signaling cascades. Promotes chemotaxis of granulocytes and monocytes via activation of the formyl peptide receptors. Promotes rearrangement of the actin cytoskeleton, cell polarization and cell migration. Promotes resolution of inflammation and wound healing. Acts via neutrophil N-formyl peptide receptors to enhance the release of CXCL2. This Homo sapiens (Human) protein is Annexin A1 (ANXA1).